The primary structure comprises 102 residues: Small ribosomal subunit protein uS10 (102 aa).

Residues 35–58 form a disordered region; it reads SGPIPLPTKTLEIPSRKSPDGEGT.

It belongs to the universal ribosomal protein uS10 family. In terms of assembly, part of the 30S ribosomal subunit.

In terms of biological role, involved in the binding of tRNA to the ribosomes. The chain is Small ribosomal subunit protein uS10 from Halorubrum lacusprofundi (strain ATCC 49239 / DSM 5036 / JCM 8891 / ACAM 34).